The chain runs to 285 residues: Probable enoyl-CoA hydratase echA12 (285 aa).

It belongs to the enoyl-CoA hydratase/isomerase family.

It carries out the reaction a (3S)-3-hydroxyacyl-CoA = a (2E)-enoyl-CoA + H2O. The catalysed reaction is a 4-saturated-(3S)-3-hydroxyacyl-CoA = a (3E)-enoyl-CoA + H2O. In terms of biological role, could possibly oxidize fatty acids using specific components. This chain is Probable enoyl-CoA hydratase echA12 (echA12), found in Mycobacterium bovis (strain ATCC BAA-935 / AF2122/97).